The chain runs to 102 residues: Putative pterin-4-alpha-carbinolamine dehydratase (102 aa).

The protein belongs to the pterin-4-alpha-carbinolamine dehydratase family.

It carries out the reaction (4aS,6R)-4a-hydroxy-L-erythro-5,6,7,8-tetrahydrobiopterin = (6R)-L-erythro-6,7-dihydrobiopterin + H2O. The polypeptide is Putative pterin-4-alpha-carbinolamine dehydratase (Burkholderia lata (strain ATCC 17760 / DSM 23089 / LMG 22485 / NCIMB 9086 / R18194 / 383)).